Here is a 609-residue protein sequence, read N- to C-terminus: Sulfite reductase [NADPH] flavoprotein alpha-component (609 aa).

One can recognise a Flavodoxin-like domain in the interval 72–210 (ITLISASQTG…LAAQWRRQLV (139 aa)). FMN-binding positions include 78-83 (SQTGNA) and 125-128 (STQG). Residues 244–458 (SSPLQATFAV…IEHNDNFRLP (215 aa)) form the FAD-binding FR-type domain. Residues T332, Q366, 396–399 (RLYS), 414–416 (TVG), Y420, and 429–432 (GGAS) contribute to the FAD site. NADP(+) is bound by residues 529–530 (SR), 535–539 (KIYVQ), and D571. Residue Y609 coordinates FAD.

It belongs to the NADPH-dependent sulphite reductase flavoprotein subunit CysJ family. The protein in the N-terminal section; belongs to the flavodoxin family. This sequence in the C-terminal section; belongs to the flavoprotein pyridine nucleotide cytochrome reductase family. Alpha(8)-beta(8). The alpha component is a flavoprotein, the beta component is a hemoprotein. The cofactor is FAD. Requires FMN as cofactor.

It carries out the reaction hydrogen sulfide + 3 NADP(+) + 3 H2O = sulfite + 3 NADPH + 4 H(+). It participates in sulfur metabolism; hydrogen sulfide biosynthesis; hydrogen sulfide from sulfite (NADPH route): step 1/1. Functionally, component of the sulfite reductase complex that catalyzes the 6-electron reduction of sulfite to sulfide. This is one of several activities required for the biosynthesis of L-cysteine from sulfate. The flavoprotein component catalyzes the electron flow from NADPH -&gt; FAD -&gt; FMN to the hemoprotein component. The sequence is that of Sulfite reductase [NADPH] flavoprotein alpha-component from Pectobacterium atrosepticum (strain SCRI 1043 / ATCC BAA-672) (Erwinia carotovora subsp. atroseptica).